The chain runs to 704 residues: MTEKQVFKTTWGGRPLEVEIGQLAKQANGAVLVRYGDTVVLSAAVASKEAKDVDFFPLTVNYEEKMYAVGKIPGGFIKREGRPSERATLTARLIDRPIRPMFSEGFRNEVQITNIVMSVEQDCTPEMAAMFGSSLALAISDIPFDGPIAGVDVGRINGEYVLNPTVEQAEQTDIELTVAGTKEAINMVESGAKEVSEEDMLGALLFGFDAIKELVAFQEEIVAAVGKPKMDVDLLQVDADLKKEIFDAYYNTMKTAVMTEEKLAREVEIDKVKDTVKEVYAEKFSEHEEEAQLLKEVKQIAEDLEKDVVRELITIDKIRPDGRKLDEIRHLSSEVSILPRVHGSGLFTRGQTQALSVCTLAPLGEHQIIDGLGVQDSKRFIHHYNFPQFSVGSTGRAGSPGRREIGHGALGERALAQIIPSEEDFPYTIRLVAEVLESNGSSSQASICAGTLALMDAGVPIKAPVAGIAMGLVSDGENYTILTDIQGLEDHLGDMDFKVAGTKDGITALQMDIKIQGITEQILTEALDQAKKARMEILEELTTTIAAPREELSQYAPKIEMIQIKPAKIKDVIGKGGETINSIIDETGVKIDIDQDGNVSIASSDAEMIKKAIKIIEELTKEVEVGQVYLAKVVRIEKFGAFVNLIKGKDGLIHISQLANERVNNVEDVVKLGDEVLVKVTEIDKQGRVNVSRKALLNEENKEK.

2 residues coordinate Mg(2+): Asp490 and Asp496. In terms of domain architecture, KH spans 557–616 (PKIEMIQIKPAKIKDVIGKGGETINSIIDETGVKIDIDQDGNVSIASSDAEMIKKAIKII). An S1 motif domain is found at 626–694 (GQVYLAKVVR…KQGRVNVSRK (69 aa)).

This sequence belongs to the polyribonucleotide nucleotidyltransferase family. Requires Mg(2+) as cofactor.

It localises to the cytoplasm. The catalysed reaction is RNA(n+1) + phosphate = RNA(n) + a ribonucleoside 5'-diphosphate. Involved in mRNA degradation. Catalyzes the phosphorolysis of single-stranded polyribonucleotides processively in the 3'- to 5'-direction. This Enterococcus faecalis (strain ATCC 700802 / V583) protein is Polyribonucleotide nucleotidyltransferase.